Consider the following 262-residue polypeptide: Apolipoprotein A-I-1 (262 aa).

The N-terminal stretch at 1 to 18 is a signal peptide; the sequence is MKFLALALTILLAAGTQA. Positions 32–63 are 3 X approximate tandem repeats; sequence VKAALSMYIAQVKLTAQRSIDLLDDTEYKEYK. Tandem repeats lie at residues 64–85 and 87–107. Residues 64 to 262 are 10 X approximate tandem repeats; sequence MQLTQSLDNL…YETISQAMKA (199 aa). The 3; half-length repeat unit spans residues 108–118; that stretch reads KDVEELRSQLE. 5 tandem repeats follow at residues 119-140, 141-162, 163-184, 185-206, and 207-228. One copy of the 9; half-length repeat lies at 229 to 239; that stretch reads PLSEDFKGQVG. Repeat unit 10 spans residues 240-262; sequence PAAEQAKQKLLAFYETISQAMKA.

This sequence belongs to the apolipoprotein A1/A4/E family.

The protein localises to the secreted. Its function is as follows. Participates in the reverse transport of cholesterol from tissues to the liver for excretion by promoting cholesterol efflux from tissues and by acting as a cofactor for the lecithin cholesterol acyltransferase (LCAT). This Oncorhynchus mykiss (Rainbow trout) protein is Apolipoprotein A-I-1.